The chain runs to 3619 residues: BEACH domain-containing protein lvsA (3619 aa).

Disordered regions lie at residues 1 to 117 (MFRR…NNNN), 648 to 709 (KIDD…EKEA), 1101 to 1129 (NNNN…NNDQ), 1367 to 1390 (SPNL…NSKK), 1636 to 1658 (IPTP…RKSI), 1893 to 1924 (SSIS…PTSG), and 1964 to 1999 (QQAA…NTPN). The segment covering 17 to 30 (PQVPHSPGHPPHQP) has biased composition (pro residues). Composition is skewed to low complexity over residues 31–59 (PQQQ…QQPQ), 68–87 (SVSS…SFSS), 97–117 (EESS…NNNN), 656–689 (NNNN…NEEN), 1101–1127 (NNNN…NNNN), 1375–1387 (NNNN…GGSN), 1640–1652 (SSSS…SSTS), and 1893–1923 (SSIS…TPTS). The WD 1 repeat unit spans residues 94–133 (SATEESSSINSNNNNNNNKNNNNNNNSNIIESNINVWTIM). The segment covering 1974 to 1986 (MSIQSSPFQSKNL) has biased composition (polar residues). Positions 2234–2258 (VKILEKLEADRVGLQKTVQSLYKSL) form a coiled coil. A WD 2 repeat occupies 2294 to 2335 (LDSDFMNAFCYPLYKLVISDQHEHVDNSIKLWRLLLSLKTSS). Disordered stretches follow at residues 2403 to 2457 (KKQH…ITKK) and 2596 to 2785 (NTSS…SEDE). Positions 2440-2452 (DRKDQSHQEEKSK) are enriched in basic and acidic residues. Residues 2596–2662 (NTSSITNNNN…TTTPQQSSSQ (67 aa)) show a composition bias toward low complexity. Polar residues-rich tracts occupy residues 2663–2687 (IKVS…SSSE) and 2694–2725 (KLQS…SEEN). Composition is skewed to low complexity over residues 2726-2735 (SSLTSASTTL) and 2742-2764 (TQTT…TTTT). Residues 2807-2932 (KDPRLNGIMY…TRDEVYHTLV (126 aa)) enclose the BEACH-type PH domain. The disordered stretch occupies residues 2940-2971 (TIGGDAQGITGGQTGNDDNDDHHGGGGGRGVR). Residues 2944–2953 (DAQGITGGQT) are compositionally biased toward gly residues. Residues 2959–2971 (DDHHGGGGGRGVR) show a composition bias toward basic and acidic residues. A BEACH domain is found at 2972–3270 (DRFTSIWRKS…QLFDKPHPKR (299 aa)). 5 WD repeats span residues 3347 to 3386 (HHDG…LAKR), 3389 to 3428 (GHTG…YVRS), 3431 to 3471 (AHEG…NYKT), 3474 to 3518 (IAND…LPDN), and 3563 to 3602 (SHST…QVKQ). A disordered region spans residues 3516–3539 (PDNNNSNNNNNNNNNNNNNATQIP). The span at 3518 to 3534 (NNNSNNNNNNNNNNNNN) shows a compositional bias: low complexity.

Its subcellular location is the contractile vacuole membrane. In terms of biological role, involved in myosin-independent cytokinesis and early steps of phagocytosis. Also involved in contractile vacuole-mediated osmoregulation. The chain is BEACH domain-containing protein lvsA (lvsA) from Dictyostelium discoideum (Social amoeba).